Here is a 308-residue protein sequence, read N- to C-terminus: NAD-dependent protein deacylase SIR4 (308 aa).

A mitochondrion-targeting transit peptide spans 1–16; that stretch reads MAATKLHPALRNAIRA. One can recognise a Deacetylase sirtuin-type domain in the interval 28–308; that stretch reads TFDVQEGIKL…EVLPAALRQL (281 aa). NAD(+)-binding positions include 53–73 and 129–132; these read GAGISTDSGIPDYRSPGRPPH and QNVD. The active-site Proton acceptor is the H147. The Zn(2+) site is built by C155, C158, C211, and C214. NAD(+) contacts are provided by residues 251–253, 277–279, and I297; these read GTS and NSG.

This sequence belongs to the sirtuin family. Class II subfamily. Zn(2+) is required as a cofactor.

It is found in the mitochondrion matrix. The enzyme catalyses N(6)-acetyl-L-lysyl-[protein] + NAD(+) + H2O = 2''-O-acetyl-ADP-D-ribose + nicotinamide + L-lysyl-[protein]. Functionally, NAD-dependent protein deacylase. Catalyzes the NAD-dependent hydrolysis of acyl groups from lysine residues. The chain is NAD-dependent protein deacylase SIR4 from Monosiga brevicollis (Choanoflagellate).